The sequence spans 255 residues: Imidazole glycerol phosphate synthase subunit HisF (255 aa).

Catalysis depends on residues D12 and D131.

It belongs to the HisA/HisF family. As to quaternary structure, heterodimer of HisH and HisF.

It localises to the cytoplasm. It carries out the reaction 5-[(5-phospho-1-deoxy-D-ribulos-1-ylimino)methylamino]-1-(5-phospho-beta-D-ribosyl)imidazole-4-carboxamide + L-glutamine = D-erythro-1-(imidazol-4-yl)glycerol 3-phosphate + 5-amino-1-(5-phospho-beta-D-ribosyl)imidazole-4-carboxamide + L-glutamate + H(+). The protein operates within amino-acid biosynthesis; L-histidine biosynthesis; L-histidine from 5-phospho-alpha-D-ribose 1-diphosphate: step 5/9. IGPS catalyzes the conversion of PRFAR and glutamine to IGP, AICAR and glutamate. The HisF subunit catalyzes the cyclization activity that produces IGP and AICAR from PRFAR using the ammonia provided by the HisH subunit. The sequence is that of Imidazole glycerol phosphate synthase subunit HisF from Ruthia magnifica subsp. Calyptogena magnifica.